Consider the following 258-residue polypeptide: Thiazole synthase (258 aa).

Catalysis depends on K100, which acts as the Schiff-base intermediate with DXP. 1-deoxy-D-xylulose 5-phosphate contacts are provided by residues G161, 187–188 (AG), and 209–210 (NT).

Belongs to the ThiG family. As to quaternary structure, homotetramer. Forms heterodimers with either ThiH or ThiS.

Its subcellular location is the cytoplasm. It carries out the reaction [ThiS sulfur-carrier protein]-C-terminal-Gly-aminoethanethioate + 2-iminoacetate + 1-deoxy-D-xylulose 5-phosphate = [ThiS sulfur-carrier protein]-C-terminal Gly-Gly + 2-[(2R,5Z)-2-carboxy-4-methylthiazol-5(2H)-ylidene]ethyl phosphate + 2 H2O + H(+). The protein operates within cofactor biosynthesis; thiamine diphosphate biosynthesis. Functionally, catalyzes the rearrangement of 1-deoxy-D-xylulose 5-phosphate (DXP) to produce the thiazole phosphate moiety of thiamine. Sulfur is provided by the thiocarboxylate moiety of the carrier protein ThiS. In vitro, sulfur can be provided by H(2)S. The chain is Thiazole synthase from Campylobacter jejuni (strain RM1221).